The sequence spans 938 residues: Isoleucine--tRNA ligase (938 aa).

The 'HIGH' region motif lies at 58 to 68 (PYANGSIHIGH). An L-isoleucyl-5'-AMP-binding site is contributed by Glu561. The short motif at 602–606 (KMSKS) is the 'KMSKS' region element. Lys605 lines the ATP pocket. Positions 901, 904, 921, and 924 each coordinate Zn(2+).

It belongs to the class-I aminoacyl-tRNA synthetase family. IleS type 1 subfamily. In terms of assembly, monomer. Zn(2+) is required as a cofactor.

It is found in the cytoplasm. It catalyses the reaction tRNA(Ile) + L-isoleucine + ATP = L-isoleucyl-tRNA(Ile) + AMP + diphosphate. In terms of biological role, catalyzes the attachment of isoleucine to tRNA(Ile). As IleRS can inadvertently accommodate and process structurally similar amino acids such as valine, to avoid such errors it has two additional distinct tRNA(Ile)-dependent editing activities. One activity is designated as 'pretransfer' editing and involves the hydrolysis of activated Val-AMP. The other activity is designated 'posttransfer' editing and involves deacylation of mischarged Val-tRNA(Ile). This is Isoleucine--tRNA ligase from Cronobacter sakazakii (strain ATCC BAA-894) (Enterobacter sakazakii).